The sequence spans 319 residues: Carboxylesterase NlhH (319 aa).

Positions His-88–Gly-90 match the Involved in the stabilization of the negatively charged intermediate by the formation of the oxyanion hole motif. Residues Ser-162, Asp-260, and His-290 contribute to the active site.

It belongs to the 'GDXG' lipolytic enzyme family. As to quaternary structure, monomer.

The catalysed reaction is a carboxylic ester + H2O = an alcohol + a carboxylate + H(+). Its function is as follows. Hydrolyzes various short-chain esters. This chain is Carboxylesterase NlhH (nlhH), found in Mycobacterium tuberculosis (strain CDC 1551 / Oshkosh).